The primary structure comprises 211 residues: uncharacterized protein (211 aa).

A run of 4 helical transmembrane segments spans residues 77–97 (FLMFHLFCNSALFAVGIAITI), 113–133 (GISVSVWLILAAYMIYWVLIG), 152–172 (ILISMVPNVIFMLVFLFNVIP), and 179–199 (LLTPWFVGTCAFATLLFPLFG).

Its subcellular location is the cell membrane. This is an uncharacterized protein from Bacillus subtilis (strain 168).